Consider the following 192-residue polypeptide: Adenylate kinase (192 aa).

Gly10–Thr15 provides a ligand contact to ATP. Residues Ser30–Val59 form an NMP region. AMP contacts are provided by residues Thr31, Arg36, Gln57–Val59, Gly85–Arg88, and Gln92. The interval Asn126–Asp142 is LID. Residue Arg127 coordinates ATP. AMP-binding residues include Arg139 and Arg150. Ala178 serves as a coordination point for ATP.

This sequence belongs to the adenylate kinase family. Monomer.

It localises to the cytoplasm. The catalysed reaction is AMP + ATP = 2 ADP. The protein operates within purine metabolism; AMP biosynthesis via salvage pathway; AMP from ADP: step 1/1. Its function is as follows. Catalyzes the reversible transfer of the terminal phosphate group between ATP and AMP. Plays an important role in cellular energy homeostasis and in adenine nucleotide metabolism. The sequence is that of Adenylate kinase from Sinorhizobium medicae (strain WSM419) (Ensifer medicae).